The chain runs to 436 residues: Serine--tRNA ligase (436 aa).

Basic and acidic residues predominate over residues 43–55; that stretch reads TKSEQLKQKRNEV. A disordered region spans residues 43–69; that stretch reads TKSEQLKQKRNEVSDQIAQAKRNKEDA. L-serine is bound at residue 237–239; it reads TAE. Position 268 to 270 (268 to 270) interacts with ATP; sequence RSE. An L-serine-binding site is contributed by Glu291. 355–358 lines the ATP pocket; that stretch reads EISS. Ser390 serves as a coordination point for L-serine.

The protein belongs to the class-II aminoacyl-tRNA synthetase family. Type-1 seryl-tRNA synthetase subfamily. As to quaternary structure, homodimer. The tRNA molecule binds across the dimer.

The protein localises to the cytoplasm. It catalyses the reaction tRNA(Ser) + L-serine + ATP = L-seryl-tRNA(Ser) + AMP + diphosphate + H(+). The catalysed reaction is tRNA(Sec) + L-serine + ATP = L-seryl-tRNA(Sec) + AMP + diphosphate + H(+). The protein operates within aminoacyl-tRNA biosynthesis; selenocysteinyl-tRNA(Sec) biosynthesis; L-seryl-tRNA(Sec) from L-serine and tRNA(Sec): step 1/1. Catalyzes the attachment of serine to tRNA(Ser). Is also able to aminoacylate tRNA(Sec) with serine, to form the misacylated tRNA L-seryl-tRNA(Sec), which will be further converted into selenocysteinyl-tRNA(Sec). In Lactobacillus gasseri (strain ATCC 33323 / DSM 20243 / BCRC 14619 / CIP 102991 / JCM 1131 / KCTC 3163 / NCIMB 11718 / NCTC 13722 / AM63), this protein is Serine--tRNA ligase.